The sequence spans 396 residues: Ornithine aminotransferase (396 aa).

N6-(pyridoxal phosphate)lysine is present on K255.

Belongs to the class-III pyridoxal-phosphate-dependent aminotransferase family. OAT subfamily. Pyridoxal 5'-phosphate serves as cofactor.

It is found in the cytoplasm. The enzyme catalyses a 2-oxocarboxylate + L-ornithine = L-glutamate 5-semialdehyde + an L-alpha-amino acid. It functions in the pathway amino-acid biosynthesis; L-proline biosynthesis; L-glutamate 5-semialdehyde from L-ornithine: step 1/1. Catalyzes the interconversion of ornithine to glutamate semialdehyde. The chain is Ornithine aminotransferase from Staphylococcus epidermidis (strain ATCC 12228 / FDA PCI 1200).